We begin with the raw amino-acid sequence, 505 residues long: ATP synthase subunit alpha, chloroplastic (505 aa).

170-177 (GDRQTGKT) serves as a coordination point for ATP.

Belongs to the ATPase alpha/beta chains family. As to quaternary structure, F-type ATPases have 2 components, CF(1) - the catalytic core - and CF(0) - the membrane proton channel. CF(1) has five subunits: alpha(3), beta(3), gamma(1), delta(1), epsilon(1). CF(0) has four main subunits: a, b, b' and c.

The protein localises to the plastid. It is found in the chloroplast thylakoid membrane. The catalysed reaction is ATP + H2O + 4 H(+)(in) = ADP + phosphate + 5 H(+)(out). Produces ATP from ADP in the presence of a proton gradient across the membrane. The alpha chain is a regulatory subunit. The chain is ATP synthase subunit alpha, chloroplastic from Oenothera biennis (German evening primrose).